The chain runs to 107 residues: uncharacterized protein (107 aa).

It localises to the mitochondrion. This is an uncharacterized protein from Arabidopsis thaliana (Mouse-ear cress).